The following is an 834-amino-acid chain: MENFCFQDSVSLFITIMVLVLLPRLSLSDTSTYTRPENFYVNCGSDSNVFYGGQTFVGDTNSSTNSVSFTNKGTEVINDQSSVAPEIYRTVRIFRHPSSYKFKLDSLGLHFVRLHFSVVFSRADLLTARFTVSATSGSNHHLKSFSPQNLTNTPRVEEFLLMMNSLEFEIRFVPDHSSLALINAIEVFSAPDDLEIPSASDKNLHTIYRLNVGGEKITPDNDTLGRTWLPDDDDFLYRKDSARNINSTQTPNYVGGLSSATDSTAPDFVYKTAKAMNRSSNEQVGMLMNVTWSFKVKSNHRHFIRIHFSDILSNLSNSDSDFYLFVNGYWRVDVKPSEQPRLASPFFKDVVNVSDGSGLLNISIGTKEANKDAGFLNGLEMMEVLSKSGSDYSNRSSSRVHIITGCAVAAAAASALVFSLLFMVFLKRRRSKKTKPEVEGTVWSPLPLHRGGSSDNRPISQYHNSPLRNLHLGLTIPFTDILSATNNFDEQLLIGKGGFGYVYKAILPDGTKAAIKRGKTGSGQGILEFQTEIQVLSRIRHRHLVSLTGYCEENSEMILVYEFMEKGTLKEHLYGSNLPSLTWKQRLEICIGAARGLDYLHSSGSEGAIIHRDVKSTNILLDEHNIAKVADFGLSKIHNQDESNISINIKGTFGYLDPEYLQTHKLTEKSDVYAFGVVLLEVLFARPAIDPYLPHEEVNLSEWVMFCKSKGTIDEILDPSLIGQIETNSLKKFMEIAEKCLKEYGDERPSMRDVIWDLEYVLQLQMMTNRREAHEEDSTAINSGGSLVAPRLMVSDSFSTNSIFQNGDESKNRFGFTDSSETRVFSQLKISDAR.

An N-terminal signal peptide occupies residues 1–28 (MENFCFQDSVSLFITIMVLVLLPRLSLS). The Extracellular segment spans residues 29–405 (DTSTYTRPEN…SSSRVHIITG (377 aa)). N61, N149, N221, N246, N277, N289, N314, N352, N361, and N394 each carry an N-linked (GlcNAc...) asparagine glycan. A helical membrane pass occupies residues 406 to 426 (CAVAAAAASALVFSLLFMVFL). The Cytoplasmic portion of the chain corresponds to 427–834 (KRRRSKKTKP…FSQLKISDAR (408 aa)). Residues 488 to 761 (FDEQLLIGKG…RDVIWDLEYV (274 aa)) form the Protein kinase domain. Residues 494–502 (IGKGGFGYV) and K516 each bind ATP. D613 (proton acceptor) is an active-site residue.

The protein belongs to the protein kinase superfamily. Ser/Thr protein kinase family.

It is found in the membrane. The protein is Probable receptor-like protein kinase At2g23200 of Arabidopsis thaliana (Mouse-ear cress).